Consider the following 1158-residue polypeptide: Protein transport protein Sec31B (1158 aa).

WD repeat units follow at residues 4–47 (KELE…EIFE), 65–110 (VSSR…SSGK), 119–159 (KHTG…VPMT), 166–206 (NPPE…PIIK), 209–254 (SHSS…SPLK), 258–298 (SHSR…VVYK), and 301–341 (TQSS…WEAQ). The stretch at 376–407 (SFAFGGKLVTFGLPSIPVQPVAQACSRPVFIS) is one WD 8; interaction with SEC13 repeat. Disordered stretches follow at residues 485 to 520 (LKSDSKSQESPQLEAVDLKSDRAHSPCAQASKHTAK), 797 to 843 (TSSY…SSDH), and 968 to 1010 (GPQD…PEPQ). Residues 822–840 (QPSSVMPFSPSQPSPSQGS) are compositionally biased toward low complexity.

The protein belongs to the WD repeat SEC31 family. COPII is composed of at least 5 proteins: the SEC23/24 complex, the SEC13/31 complex and SAR1. SEC13 and SEC31 make a 2:2 tetramer that forms the edge element of the COPII outer coat. The tetramer self-assembles in multiple copies to form the complete polyhedral cage. Interacts (via WD 8) with SEC13. Interacts with SEC31A. In terms of processing, monoubiquitinated by the BCR(KLHL12) E3 ubiquitin ligase complex, leading to regulate the size of COPII coats.

The protein resides in the cytoplasm. The protein localises to the cytoplasmic vesicle. Its subcellular location is the COPII-coated vesicle membrane. It is found in the endoplasmic reticulum membrane. Its function is as follows. As a component of the coat protein complex II (COPII), may function in vesicle budding and cargo export from the endoplasmic reticulum. The chain is Protein transport protein Sec31B (Sec31b) from Mus musculus (Mouse).